The chain runs to 238 residues: Ribonuclease PH (238 aa).

Phosphate contacts are provided by residues arginine 86 and glycine 124–arginine 126.

The protein belongs to the RNase PH family. Homohexameric ring arranged as a trimer of dimers.

It catalyses the reaction tRNA(n+1) + phosphate = tRNA(n) + a ribonucleoside 5'-diphosphate. Phosphorolytic 3'-5' exoribonuclease that plays an important role in tRNA 3'-end maturation. Removes nucleotide residues following the 3'-CCA terminus of tRNAs; can also add nucleotides to the ends of RNA molecules by using nucleoside diphosphates as substrates, but this may not be physiologically important. Probably plays a role in initiation of 16S rRNA degradation (leading to ribosome degradation) during starvation. The polypeptide is Ribonuclease PH (Psychrobacter cryohalolentis (strain ATCC BAA-1226 / DSM 17306 / VKM B-2378 / K5)).